The sequence spans 500 residues: Glycerol kinase (500 aa).

Residue threonine 16 participates in ADP binding. The ATP site is built by threonine 16 and threonine 17. A sn-glycerol 3-phosphate-binding site is contributed by threonine 16. ADP is bound at residue arginine 20. Positions 86, 87, 138, and 243 each coordinate sn-glycerol 3-phosphate. Positions 86, 87, 138, 243, and 244 each coordinate glycerol. Positions 265 and 313 each coordinate ADP. 4 residues coordinate ATP: threonine 265, glycine 313, glutamine 317, and glycine 414. 2 residues coordinate ADP: glycine 414 and asparagine 418.

This sequence belongs to the FGGY kinase family.

The enzyme catalyses glycerol + ATP = sn-glycerol 3-phosphate + ADP + H(+). Its pathway is polyol metabolism; glycerol degradation via glycerol kinase pathway; sn-glycerol 3-phosphate from glycerol: step 1/1. With respect to regulation, inhibited by fructose 1,6-bisphosphate (FBP). Its function is as follows. Key enzyme in the regulation of glycerol uptake and metabolism. Catalyzes the phosphorylation of glycerol to yield sn-glycerol 3-phosphate. The chain is Glycerol kinase from Nostoc sp. (strain PCC 7120 / SAG 25.82 / UTEX 2576).